The primary structure comprises 206 residues: Large ribosomal subunit protein uL4 (206 aa).

It belongs to the universal ribosomal protein uL4 family. As to quaternary structure, part of the 50S ribosomal subunit.

In terms of biological role, one of the primary rRNA binding proteins, this protein initially binds near the 5'-end of the 23S rRNA. It is important during the early stages of 50S assembly. It makes multiple contacts with different domains of the 23S rRNA in the assembled 50S subunit and ribosome. Functionally, forms part of the polypeptide exit tunnel. This Bradyrhizobium diazoefficiens (strain JCM 10833 / BCRC 13528 / IAM 13628 / NBRC 14792 / USDA 110) protein is Large ribosomal subunit protein uL4.